Reading from the N-terminus, the 161-residue chain is Putative sporulation sigma factor-processing peptidase (161 aa).

Residue aspartate 38 is part of the active site.

Belongs to the peptidase U4 family.

Probably activates the RNA polymerase sigma-35 factor at the stage II of sporulation. The polypeptide is Putative sporulation sigma factor-processing peptidase (Bacillus thuringiensis subsp. kurstaki).